We begin with the raw amino-acid sequence, 431 residues long: Tol-Pal system protein TolB (431 aa).

A signal peptide spans 1 to 26 (MSLMTKLGFRALVASCLITAGSAANA). The disordered stretch occupies residues 406-431 (DGSAPPQILSVQGGSVREPSWGPFMQ).

Belongs to the TolB family. As to quaternary structure, the Tol-Pal system is composed of five core proteins: the inner membrane proteins TolA, TolQ and TolR, the periplasmic protein TolB and the outer membrane protein Pal. They form a network linking the inner and outer membranes and the peptidoglycan layer.

It is found in the periplasm. Functionally, part of the Tol-Pal system, which plays a role in outer membrane invagination during cell division and is important for maintaining outer membrane integrity. The chain is Tol-Pal system protein TolB from Burkholderia orbicola (strain MC0-3).